The following is a 106-amino-acid chain: Thiosulfate sulfurtransferase GlpE (106 aa).

Residues 16 to 104 (REQGAVLVDV…WRATYPDETV (89 aa)) form the Rhodanese domain. C64 serves as the catalytic Cysteine persulfide intermediate.

Belongs to the GlpE family.

The protein resides in the cytoplasm. It catalyses the reaction thiosulfate + hydrogen cyanide = thiocyanate + sulfite + 2 H(+). It carries out the reaction thiosulfate + [thioredoxin]-dithiol = [thioredoxin]-disulfide + hydrogen sulfide + sulfite + 2 H(+). Functionally, transferase that catalyzes the transfer of sulfur from thiosulfate to thiophilic acceptors such as cyanide or dithiols. May function in a CysM-independent thiosulfate assimilation pathway by catalyzing the conversion of thiosulfate to sulfite, which can then be used for L-cysteine biosynthesis. The chain is Thiosulfate sulfurtransferase GlpE from Pseudomonas savastanoi pv. phaseolicola (strain 1448A / Race 6) (Pseudomonas syringae pv. phaseolicola (strain 1448A / Race 6)).